Consider the following 54-residue polypeptide: Large ribosomal subunit protein bL33 (54 aa).

It belongs to the bacterial ribosomal protein bL33 family.

This chain is Large ribosomal subunit protein bL33, found in Corynebacterium jeikeium (strain K411).